The following is a 260-amino-acid chain: Adenosylcobinamide-GDP ribazoletransferase (260 aa).

Helical transmembrane passes span 40–60 (AFPF…LLLL), 64–84 (ADPL…TGAL), 117–137 (YGAI…AAIV), 142–162 (PLAA…AITW), 189–209 (FALV…FGLW), and 210–230 (PLVA…VFIR).

The protein belongs to the CobS family. It depends on Mg(2+) as a cofactor.

Its subcellular location is the cell inner membrane. The enzyme catalyses alpha-ribazole + adenosylcob(III)inamide-GDP = adenosylcob(III)alamin + GMP + H(+). It carries out the reaction alpha-ribazole 5'-phosphate + adenosylcob(III)inamide-GDP = adenosylcob(III)alamin 5'-phosphate + GMP + H(+). The protein operates within cofactor biosynthesis; adenosylcobalamin biosynthesis; adenosylcobalamin from cob(II)yrinate a,c-diamide: step 7/7. Functionally, joins adenosylcobinamide-GDP and alpha-ribazole to generate adenosylcobalamin (Ado-cobalamin). Also synthesizes adenosylcobalamin 5'-phosphate from adenosylcobinamide-GDP and alpha-ribazole 5'-phosphate. In Rhizobium etli (strain CIAT 652), this protein is Adenosylcobinamide-GDP ribazoletransferase.